The primary structure comprises 328 residues: L-lactate dehydrogenase (328 aa).

NAD(+) is bound by residues V18, E39, K46, Y71, and G85 to A86. The substrate site is built by Q88 and R94. Residues S107, A124–N126, and S149 contribute to the NAD(+) site. N126 to D129 is a substrate binding site. D154–R157 is a binding site for substrate. 2 residues coordinate beta-D-fructose 1,6-bisphosphate: R159 and H174. H181 acts as the Proton acceptor in catalysis. At Y226 the chain carries Phosphotyrosine. Substrate is bound at residue T235.

Belongs to the LDH/MDH superfamily. LDH family. In terms of assembly, homotetramer.

It is found in the cytoplasm. The catalysed reaction is (S)-lactate + NAD(+) = pyruvate + NADH + H(+). The protein operates within fermentation; pyruvate fermentation to lactate; (S)-lactate from pyruvate: step 1/1. With respect to regulation, allosterically activated by fructose 1,6-bisphosphate (FBP). Functionally, catalyzes the conversion of lactate to pyruvate. This Streptococcus gordonii (strain Challis / ATCC 35105 / BCRC 15272 / CH1 / DL1 / V288) protein is L-lactate dehydrogenase.